Here is a 90-residue protein sequence, read N- to C-terminus: U7-theraphotoxin-Hhn1a 8 (90 aa).

Residues 1-19 (MKTAIFTVVLALAVFAVLS) form the signal peptide. The propeptide occupies 20–50 (FGWEANEKALSEEFTELIHEKGAASETEARE). 3 disulfides stabilise this stretch: cysteine 51–cysteine 65, cysteine 58–cysteine 70, and cysteine 64–cysteine 81.

Belongs to the neurotoxin 10 (Hwtx-1) family. 13 (Hntx-13) subfamily. In terms of tissue distribution, expressed by the venom gland.

Its subcellular location is the secreted. Functionally, ion channel inhibitor. The chain is U7-theraphotoxin-Hhn1a 8 from Cyriopagopus hainanus (Chinese bird spider).